The following is a 424-amino-acid chain: STAM-binding protein (424 aa).

Residues methionine 1 to lysine 127 form an interaction with CHMP3 region. Residues serine 2 and serine 48 each carry the phosphoserine modification. An interaction with STAM region spans residues proline 227–proline 231. Serine 243 is subject to Phosphoserine. The 132-residue stretch at isoleucine 257–serine 388 folds into the MPN domain. Residues histidine 335, histidine 337, aspartate 348, histidine 350, cysteine 390, histidine 396, and histidine 398 each contribute to the Zn(2+) site. Positions histidine 335–aspartate 348 match the JAMM motif motif.

This sequence belongs to the peptidase M67C family. Interacts with STAM. Interacts with SMAD6 and SMAD7. Interacts with CHMP3; the interaction appears to relieve the autoinhibition of CHMP3. Interacts with SMURF2 and RNF11; this interaction promotes ubiquitination. The cofactor is Zn(2+). Post-translationally, phosphorylated after BMP type I receptor activation. Ubiquitinated by SMURF2 in the presence of RNF11. As to expression, expressed in brain.

The protein resides in the nucleus. It is found in the membrane. Its subcellular location is the cytoplasm. The protein localises to the early endosome. With respect to regulation, inhibited by N-ethylmaleimide. In terms of biological role, zinc metalloprotease that specifically cleaves 'Lys-63'-linked polyubiquitin chains. Does not cleave 'Lys-48'-linked polyubiquitin chains. Plays a role in signal transduction for cell growth and MYC induction mediated by IL-2 and GM-CSF. Potentiates BMP (bone morphogenetic protein) signaling by antagonizing the inhibitory action of SMAD6 and SMAD7. Has a key role in regulation of cell surface receptor-mediated endocytosis and ubiquitin-dependent sorting of receptors to lysosomes. Endosomal localization of STAMBP is required for efficient EGFR degradation but not for its internalization. Involved in the negative regulation of PI3K-AKT-mTOR and RAS-MAP signaling pathways. The sequence is that of STAM-binding protein (Stambp) from Mus musculus (Mouse).